The sequence spans 330 residues: tRNA U34 carboxymethyltransferase (330 aa).

Residues K91, W105, K110, G130, 152–154, 181–182, M196, Y200, and R315 each bind carboxy-S-adenosyl-L-methionine; these read DPS and IE.

The protein belongs to the class I-like SAM-binding methyltransferase superfamily. CmoB family. As to quaternary structure, homotetramer.

The enzyme catalyses carboxy-S-adenosyl-L-methionine + 5-hydroxyuridine(34) in tRNA = 5-carboxymethoxyuridine(34) in tRNA + S-adenosyl-L-homocysteine + H(+). Functionally, catalyzes carboxymethyl transfer from carboxy-S-adenosyl-L-methionine (Cx-SAM) to 5-hydroxyuridine (ho5U) to form 5-carboxymethoxyuridine (cmo5U) at position 34 in tRNAs. In Shewanella piezotolerans (strain WP3 / JCM 13877), this protein is tRNA U34 carboxymethyltransferase.